Reading from the N-terminus, the 211-residue chain is Ribosomal RNA small subunit methyltransferase G (211 aa).

S-adenosyl-L-methionine contacts are provided by glycine 73, phenylalanine 78, and arginine 141.

This sequence belongs to the methyltransferase superfamily. RNA methyltransferase RsmG family.

It localises to the cytoplasm. The enzyme catalyses guanosine(527) in 16S rRNA + S-adenosyl-L-methionine = N(7)-methylguanosine(527) in 16S rRNA + S-adenosyl-L-homocysteine. Its function is as follows. Specifically methylates the N7 position of guanine in position 527 of 16S rRNA. The protein is Ribosomal RNA small subunit methyltransferase G of Jannaschia sp. (strain CCS1).